A 212-amino-acid polypeptide reads, in one-letter code: Thiamine-phosphate synthase (212 aa).

Residues 35 to 39 (QLRDK) and Asn67 each bind 4-amino-2-methyl-5-(diphosphooxymethyl)pyrimidine. Mg(2+) is bound by residues Asp68 and Asp87. Residue Ser106 coordinates 4-amino-2-methyl-5-(diphosphooxymethyl)pyrimidine. 132-134 (TGS) is a binding site for 2-[(2R,5Z)-2-carboxy-4-methylthiazol-5(2H)-ylidene]ethyl phosphate. 4-amino-2-methyl-5-(diphosphooxymethyl)pyrimidine is bound at residue Lys135. 2-[(2R,5Z)-2-carboxy-4-methylthiazol-5(2H)-ylidene]ethyl phosphate contacts are provided by residues Gly163 and 183–184 (IS).

Belongs to the thiamine-phosphate synthase family. The cofactor is Mg(2+).

The catalysed reaction is 2-[(2R,5Z)-2-carboxy-4-methylthiazol-5(2H)-ylidene]ethyl phosphate + 4-amino-2-methyl-5-(diphosphooxymethyl)pyrimidine + 2 H(+) = thiamine phosphate + CO2 + diphosphate. It catalyses the reaction 2-(2-carboxy-4-methylthiazol-5-yl)ethyl phosphate + 4-amino-2-methyl-5-(diphosphooxymethyl)pyrimidine + 2 H(+) = thiamine phosphate + CO2 + diphosphate. The enzyme catalyses 4-methyl-5-(2-phosphooxyethyl)-thiazole + 4-amino-2-methyl-5-(diphosphooxymethyl)pyrimidine + H(+) = thiamine phosphate + diphosphate. It participates in cofactor biosynthesis; thiamine diphosphate biosynthesis; thiamine phosphate from 4-amino-2-methyl-5-diphosphomethylpyrimidine and 4-methyl-5-(2-phosphoethyl)-thiazole: step 1/1. Functionally, condenses 4-methyl-5-(beta-hydroxyethyl)thiazole monophosphate (THZ-P) and 2-methyl-4-amino-5-hydroxymethyl pyrimidine pyrophosphate (HMP-PP) to form thiamine monophosphate (TMP). This is Thiamine-phosphate synthase from Methanocella arvoryzae (strain DSM 22066 / NBRC 105507 / MRE50).